The chain runs to 1025 residues: Leucyl-cystinyl aminopeptidase (1025 aa).

The residue at position 1 (Met-1) is an N-acetylmethionine. Topologically, residues 1 to 109 (METFTNDRLQ…DGTCSVPSAR (109 aa)) are cytoplasmic. The Dileucine internalization motif signature appears at 53-54 (LL). Residue Tyr-70 is modified to Phosphotyrosine. Positions 76 to 77 (LL) match the Dileucine internalization motif motif. Residues Ser-80 and Ser-91 each carry the phosphoserine; by PKC/PRKCZ; in vitro modification. Residues 96–101 (RQSPDG) are tankyrase binding. The chain crosses the membrane as a helical; Signal-anchor for type II membrane protein span at residues 110–131 (TLVICVFVIVVAVSVIMVIYLL). At 132-1025 (PRCTFTKEGC…RNLKTLTLWL (894 aa)) the chain is on the extracellular side. Asn-145, Asn-184, Asn-215, Asn-256, and Asn-266 each carry an N-linked (GlcNAc...) asparagine glycan. A substrate-binding site is contributed by Glu-295. 2 N-linked (GlcNAc...) asparagine glycosylation sites follow: Asn-368 and Asn-374. 428–432 (GAMEN) is a binding site for substrate. Asn-447 is a glycosylation site (N-linked (GlcNAc...) asparagine). His-464 contributes to the Zn(2+) binding site. Glu-465 (proton acceptor) is an active-site residue. Zn(2+) contacts are provided by His-468 and Glu-487. N-linked (GlcNAc...) asparagine glycans are attached at residues Asn-525, Asn-578, Asn-664, Asn-682, Asn-695, Asn-758, Asn-834, Asn-850, and Asn-989.

This sequence belongs to the peptidase M1 family. In terms of assembly, homodimer. Binds tankyrases 1 and 2. The cofactor is Zn(2+). N-glycosylated. In terms of tissue distribution, highly expressed in heart, brain, spleen, lung, kidney and white adipose tissue. Detected at lower levels in skeletal muscle and liver.

It localises to the cell membrane. It is found in the endomembrane system. It catalyses the reaction Release of an N-terminal amino acid, Cys-|-Xaa-, in which the half-cystine residue is involved in a disulfide loop, notably in oxytocin or vasopressin. Hydrolysis rates on a range of aminoacyl arylamides exceed that for the cystinyl derivative, however.. In terms of biological role, release of an N-terminal amino acid, cleave before cysteine, leucine as well as other amino acids. Degrades peptide hormones such as oxytocin, vasopressin and angiotensin III, and plays a role in maintaining homeostasis during pregnancy. May be involved in the inactivation of neuronal peptides in the brain. Cleaves Met-enkephalin and dynorphin. Binds angiotensin IV and may be the angiotensin IV receptor in the brain. This is Leucyl-cystinyl aminopeptidase (Lnpep) from Rattus norvegicus (Rat).